An 84-amino-acid polypeptide reads, in one-letter code: Large ribosomal subunit protein bL27 (84 aa).

The tract at residues methionine 1–valine 23 is disordered.

Belongs to the bacterial ribosomal protein bL27 family.

In Salinispora arenicola (strain CNS-205), this protein is Large ribosomal subunit protein bL27.